We begin with the raw amino-acid sequence, 373 residues long: Innexin shaking-B (373 aa).

At 1–21 the chain is on the cytoplasmic side; it reads MLDIFRGLKSLVKISHVNTDS. A helical membrane pass occupies residues 22 to 42; the sequence is PVFRLHYSITVIILMSFSLIV. The Extracellular segment spans residues 43–106; the sequence is TTRQYVGNPI…SAEATAADKK (64 aa). Residues 107 to 127 traverse the membrane as a helical segment; the sequence is IYKYYQWVCFCLFFQAILFYT. At 128-176 the chain is on the cytoplasmic side; the sequence is PRWLWKSWEGGKIHALMMDLDIGICSEIEKKQKKKLLLDYLWDNLRYHN. A helical transmembrane segment spans residues 177–199; that stretch reads WWAYRYYVCEFLSLCNVIGQMFL. At 200 to 268 the chain is on the extracellular side; the sequence is MNRFFDGEFM…ILPLNVVNEK (69 aa). Residues 269–289 form a helical membrane-spanning segment; it reads IYIFLWFWFIILTILTTLTIF. The Cytoplasmic portion of the chain corresponds to 290 to 373; sequence YRIIIIFSPR…PGMKGEIQDA (84 aa).

Belongs to the pannexin family. In terms of assembly, monomer.

It is found in the cell membrane. The protein resides in the cell junction. It localises to the gap junction. Its function is as follows. Structural component of the gap junctions at electrical synapses in distal and mid-depth levels in the lamina. The sequence is that of Innexin shaking-B from Anopheles gambiae (African malaria mosquito).